The following is a 115-amino-acid chain: NADH-ubiquinone oxidoreductase chain 3 (115 aa).

3 helical membrane passes run 3 to 23 (LLIIITINITLSFILISIAFW), 55 to 75 (FFLVAITFLLFDLEIALLLPL), and 86 to 106 (TMMATAFILVTILALGLSYEW).

This sequence belongs to the complex I subunit 3 family. Core subunit of respiratory chain NADH dehydrogenase (Complex I) which is composed of 45 different subunits. Interacts with TMEM186. Interacts with TMEM242.

The protein localises to the mitochondrion inner membrane. It catalyses the reaction a ubiquinone + NADH + 5 H(+)(in) = a ubiquinol + NAD(+) + 4 H(+)(out). Functionally, core subunit of the mitochondrial membrane respiratory chain NADH dehydrogenase (Complex I) which catalyzes electron transfer from NADH through the respiratory chain, using ubiquinone as an electron acceptor. Essential for the catalytic activity of complex I. The protein is NADH-ubiquinone oxidoreductase chain 3 of Rattus norvegicus (Rat).